The sequence spans 149 residues: Large ribosomal subunit protein bL9 (149 aa).

This sequence belongs to the bacterial ribosomal protein bL9 family.

In terms of biological role, binds to the 23S rRNA. In Helicobacter pylori (strain P12), this protein is Large ribosomal subunit protein bL9.